A 445-amino-acid polypeptide reads, in one-letter code: Exodeoxyribonuclease 7 large subunit (445 aa).

Belongs to the XseA family. In terms of assembly, heterooligomer composed of large and small subunits.

The protein resides in the cytoplasm. The enzyme catalyses Exonucleolytic cleavage in either 5'- to 3'- or 3'- to 5'-direction to yield nucleoside 5'-phosphates.. In terms of biological role, bidirectionally degrades single-stranded DNA into large acid-insoluble oligonucleotides, which are then degraded further into small acid-soluble oligonucleotides. The chain is Exodeoxyribonuclease 7 large subunit from Xanthomonas oryzae pv. oryzae (strain KACC10331 / KXO85).